A 332-amino-acid polypeptide reads, in one-letter code: L-lactate dehydrogenase A-like 6A (332 aa).

The residue at position 2 (A2) is an N-acetylalanine. An N6-acetyllysine; alternate mark is found at K5 and K57. An N6-succinyllysine; alternate modification is found at K5. 29-57 (GSVGVACAISILLKGLSDELVLVDVDEGK) contacts NAD(+). K57 participates in a covalent cross-link: Glycyl lysine isopeptide (Lys-Gly) (interchain with G-Cter in SUMO2); alternate. The residue at position 81 (K81) is an N6-acetyllysine. R99 is an NAD(+) binding site. R106 contributes to the substrate binding site. At K118 the chain carries N6-acetyllysine; alternate. K118 carries the N6-succinyllysine; alternate modification. Residue N138 participates in NAD(+) binding. Substrate is bound by residues N138 and R169. The active-site Proton acceptor is H193. Residue K232 is modified to N6-acetyllysine. Residue Y239 is modified to Phosphotyrosine. K243 carries the N6-acetyllysine modification. T248 provides a ligand contact to substrate. At T309 the chain carries Phosphothreonine. An N6-acetyllysine; alternate modification is found at K318. K318 is modified (N6-succinyllysine; alternate). T322 bears the Phosphothreonine mark.

It belongs to the LDH/MDH superfamily. LDH family. In terms of tissue distribution, testis-specific.

Its subcellular location is the cytoplasm. The enzyme catalyses (S)-lactate + NAD(+) = pyruvate + NADH + H(+). Its pathway is fermentation; pyruvate fermentation to lactate; (S)-lactate from pyruvate: step 1/1. Functionally, catalyzes the interconversion of L-lactate and pyruvate with nicotinamide adenine dinucleotide NAD(+) as a coenzyme. Significantly increases the transcriptional activity of JUN, when overexpressed. This Homo sapiens (Human) protein is L-lactate dehydrogenase A-like 6A (LDHAL6A).